A 449-amino-acid polypeptide reads, in one-letter code: Exodeoxyribonuclease 7 large subunit (449 aa).

The protein belongs to the XseA family. As to quaternary structure, heterooligomer composed of large and small subunits.

It localises to the cytoplasm. It catalyses the reaction Exonucleolytic cleavage in either 5'- to 3'- or 3'- to 5'-direction to yield nucleoside 5'-phosphates.. Functionally, bidirectionally degrades single-stranded DNA into large acid-insoluble oligonucleotides, which are then degraded further into small acid-soluble oligonucleotides. The chain is Exodeoxyribonuclease 7 large subunit from Salmonella paratyphi A (strain ATCC 9150 / SARB42).